The following is a 362-amino-acid chain: Putative F-box protein At3g25750 (362 aa).

An F-box domain is found at 4–52 (TEWSDLPEELLDLIANRYSSNIDVLRIRSTCKSWRSAVAMSKERLQFRF).

The sequence is that of Putative F-box protein At3g25750 from Arabidopsis thaliana (Mouse-ear cress).